A 388-amino-acid polypeptide reads, in one-letter code: Pentatricopeptide repeat-containing protein 2, mitochondrial (388 aa).

One copy of the PPR repeat lies at 166–200 (TSFNILMDMLFIKGKYKSALQVLIEMKNQDVKFTK). Phosphoserine is present on Ser382.

Belongs to the PTCD2 family.

Its subcellular location is the mitochondrion. Its function is as follows. Involved in mitochondrial RNA maturation and mitochondrial respiratory chain function. This is Pentatricopeptide repeat-containing protein 2, mitochondrial (PTCD2) from Homo sapiens (Human).